The sequence spans 370 residues: Peptide chain release factor 1 (370 aa).

Position 239 is an N5-methylglutamine (Gln-239).

Belongs to the prokaryotic/mitochondrial release factor family. In terms of processing, methylated by PrmC. Methylation increases the termination efficiency of RF1.

The protein resides in the cytoplasm. Peptide chain release factor 1 directs the termination of translation in response to the peptide chain termination codons UAG and UAA. This Bacteroides thetaiotaomicron (strain ATCC 29148 / DSM 2079 / JCM 5827 / CCUG 10774 / NCTC 10582 / VPI-5482 / E50) protein is Peptide chain release factor 1.